The sequence spans 24 residues: Brevinin-1Pc (24 aa).

Cysteines 18 and 24 form a disulfide.

As to expression, expressed by the skin glands.

The protein localises to the secreted. Its function is as follows. Antibacterial activity against Gram-positive bacterium S.aureus and Gram-negative bacterium E.coli. Has activity against C.albicans. In Lithobates pipiens (Northern leopard frog), this protein is Brevinin-1Pc.